The chain runs to 454 residues: L-cysteine desulfhydrase-like protein lolT1 (454 aa).

K227 bears the N6-(pyridoxal phosphate)lysine mark.

The protein belongs to the class-V pyridoxal-phosphate-dependent aminotransferase family. Pyridoxal 5'-phosphate is required as a cofactor.

Its pathway is alkaloid biosynthesis. In terms of biological role, L-cysteine desulfhydrase-like protein; part of the gene cluster that mediates the biosynthesis of loline alkaloids, potent insecticidal agents composed of a pyrrolizidine ring system and an uncommon ether bridge linking carbons 2 and 7. Lolines are structurally differentiated by the various modifications of the L-amino group and include norloline, loline, N-methylloline, N-acetylloline, N-acetylnorloline, and N-formylloline. The first committed step is the condensation of O-acetyl-L-homoserine (derived from L-aspartic acid) and L-proline, probably catalyzed by the gamma-type pyridoxal 5'-phosphate(PLP)-dependent enzyme lolC, to give the diamino diacid, NACPP. Ensuing cyclization, decarboxylation, and acetylation steps yield 1-exo-acetamidopyrrolizidine (AcAP). LolO is required for installation of the ether bridge upon the pathway intermediate, 1-exo-acetamidopyrrolizidine (AcAP). In sequential 2-oxoglutarate- and O(2)-consuming steps, lolO removes hydrogens from C2 and C7 of AcAP to form both carbon-oxygen bonds in N-acetylnorloline (NANL), the precursor to all other lolines. The enzymes lolD, lolE, lolF and lolT have also been proposed to be involved in the ether-bridge installation. Further processing of the exocyclic moiety of NANL by fungal N-acetamidase (LolN), methyltransferase (LolM), and cytochrome P450 (LolP) enzymes, with occasional involvement of a plant acetyltransferase, generates the other known lolines. LolN transforms NANL to norlonine which is monomethylated and dimethylated to respectively lonine and N-methyllonine (NML) by lolM. LolP catalyzes hydroxylation of the methyl group in N-methylloline (NML) and further oxygenation to N-formylloline (NFL). A plant acetyltransferase is responsible for the acetylation of loline to form N-acetylloline (NAL). LolA might interact with aspartate kinase to prevent feedback inhibition of its activity by these end products and thereby promote production of L-homoserine from L-aspartate. This is L-cysteine desulfhydrase-like protein lolT1 from Epichloe uncinata (Endophyte fungus).